Consider the following 915-residue polypeptide: DNA (cytosine-5)-methyltransferase 3 (915 aa).

The span at 1 to 14 (MAPSSPSSARPTRA) shows a compositional bias: low complexity. Disordered regions lie at residues 1–107 (MAPS…AEEQ) and 152–171 (HSNWPKRYERSTAANKPEED). Basic and acidic residues predominate over residues 21-30 (AMAEEIHQNQ). Residues 42–57 (AKRRRKAASSGKKPKP) are compositionally biased toward basic residues. The span at 71–80 (KKGETEKTEP) shows a compositional bias: basic and acidic residues. A compositionally biased stretch (acidic residues) spans 81–107 (VVDDVCAEEPDEEELAMGEEEAEAEEQ). Residues 188-313 (IVYCLGDDVY…VAYSTFANIS (126 aa)) enclose the BAH domain. The segment covering 315 to 328 (ENGQSGSETASGIS) has biased composition (polar residues). Residues 315-338 (ENGQSGSETASGISSDDAGLETSS) are disordered. The SAM-dependent MTase C5-type domain maps to 345-876 (ATLLDLYSGC…YCLGQAYLGE (532 aa)). One can recognise a Chromo domain in the interval 445–508 (FVVQKLIGIR…EGRKRKILPL (64 aa)). Residue Cys-521 is part of the active site.

It belongs to the class I-like SAM-binding methyltransferase superfamily. C5-methyltransferase family.

The protein resides in the nucleus. It catalyses the reaction a 2'-deoxycytidine in DNA + S-adenosyl-L-methionine = a 5-methyl-2'-deoxycytidine in DNA + S-adenosyl-L-homocysteine + H(+). In terms of biological role, may be involved in the CpXpG methylation and in gene silencing. The sequence is that of DNA (cytosine-5)-methyltransferase 3 (DMT105) from Zea mays (Maize).